A 299-amino-acid polypeptide reads, in one-letter code: Acetylglutamate kinase (299 aa).

Substrate contacts are provided by residues 64-65 (GG), Arg-86, and Asn-197.

It belongs to the acetylglutamate kinase family. ArgB subfamily.

Its subcellular location is the cytoplasm. It carries out the reaction N-acetyl-L-glutamate + ATP = N-acetyl-L-glutamyl 5-phosphate + ADP. It participates in amino-acid biosynthesis; L-arginine biosynthesis; N(2)-acetyl-L-ornithine from L-glutamate: step 2/4. Its function is as follows. Catalyzes the ATP-dependent phosphorylation of N-acetyl-L-glutamate. The protein is Acetylglutamate kinase of Persephonella marina (strain DSM 14350 / EX-H1).